Reading from the N-terminus, the 174-residue chain is Co-chaperone protein HscB homolog (174 aa).

Positions 2 to 74 constitute a J domain; it reads NYFELFKFSP…IRRAEHMLSL (73 aa).

Belongs to the HscB family. Interacts with HscA and stimulates its ATPase activity.

In terms of biological role, co-chaperone involved in the maturation of iron-sulfur cluster-containing proteins. Seems to help targeting proteins to be folded toward HscA. The polypeptide is Co-chaperone protein HscB homolog (Shewanella baltica (strain OS155 / ATCC BAA-1091)).